Consider the following 159-residue polypeptide: Putative pre-16S rRNA nuclease (159 aa).

Belongs to the YqgF nuclease family.

Its subcellular location is the cytoplasm. Could be a nuclease involved in processing of the 5'-end of pre-16S rRNA. This is Putative pre-16S rRNA nuclease from Thermobifida fusca (strain YX).